The sequence spans 1381 residues: Hepatocyte growth factor receptor (1381 aa).

Residues methionine 1–glycine 24 form the signal peptide. The Extracellular segment spans residues glutamate 25–threonine 932. A Sema domain is found at lysine 27–leucine 515. N-linked (GlcNAc...) asparagine glycosylation is present at asparagine 45. 4 disulfides stabilise this stretch: cysteine 95–cysteine 101, cysteine 98–cysteine 160, cysteine 133–cysteine 141, and cysteine 172–cysteine 175. An N-linked (GlcNAc...) asparagine glycan is attached at asparagine 106. The N-linked (GlcNAc...) asparagine glycan is linked to asparagine 149. N-linked (GlcNAc...) asparagine glycosylation is present at asparagine 202. Disulfide bonds link cysteine 298-cysteine 363 and cysteine 385-cysteine 397. The N-linked (GlcNAc...) asparagine glycan is linked to asparagine 399. 4 disulfide bridges follow: cysteine 520/cysteine 538, cysteine 526/cysteine 561, cysteine 529/cysteine 545, and cysteine 541/cysteine 551. IPT/TIG domains are found at residues proline 563–valine 655, proline 657–arginine 739, and proline 742–valine 836. Threonine 582 is a glycosylation site (O-linked (Man) threonine). Residues asparagine 607 and asparagine 635 are each glycosylated (N-linked (GlcNAc...) asparagine). Residues threonine 676 and threonine 761 are each glycosylated (O-linked (Man) threonine). N-linked (GlcNAc...) asparagine glycans are attached at residues asparagine 785, asparagine 879, and asparagine 930. Residues glycine 933–leucine 955 traverse the membrane as a helical segment. Over lysine 956–threonine 1381 the chain is Cytoplasmic. The residue at position 966 (serine 966) is a Phosphoserine. Threonine 977 is modified (phosphothreonine). Phosphoserine occurs at positions 990, 997, and 1000. A Phosphotyrosine modification is found at tyrosine 1003. Residues valine 1078–isoleucine 1345 enclose the Protein kinase domain. Residues isoleucine 1084 to valine 1092 and lysine 1110 contribute to the ATP site. Aspartate 1204 (proton acceptor) is an active-site residue. The tract at residues leucine 1212–threonine 1381 is interaction with RANBP9. Tyrosine 1230 carries the phosphotyrosine modification. A phosphotyrosine; by autocatalysis mark is found at tyrosine 1234 and tyrosine 1235. Threonine 1289 carries the phosphothreonine modification. Positions tryptophan 1320–valine 1359 are interaction with MUC20. A phosphotyrosine; by autocatalysis mark is found at tyrosine 1349 and tyrosine 1356. Tyrosine 1365 carries the post-translational modification Phosphotyrosine.

Belongs to the protein kinase superfamily. Tyr protein kinase family. As to quaternary structure, heterodimer made of an alpha chain (50 kDa) and a beta chain (145 kDa) which are disulfide linked. Binds PLXNB1. Interacts when phosphorylated with downstream effectors including STAT3, PIK3R1, SRC, PCLG1, GRB2 and GAB1. Interacts with SPSB1, SPSB2 and SPSB4. Interacts with INPP5D/SHIP1. When phosphorylated at Tyr-1356, interacts with INPPL1/SHIP2. Interacts with RANBP9 and RANBP10, as well as SPSB1, SPSB2, SPSB3 and SPSB4. SPSB1 binding occurs in the presence and in the absence of HGF, however HGF treatment has a positive effect on this interaction. Interacts with MUC20; prevents interaction with GRB2 and suppresses hepatocyte growth factor-induced cell proliferation. Interacts with GRB10. Interacts with PTPN1 and PTPN2. Interacts with HSP90AA1 and HSP90AB1; the interaction suppresses MET kinase activity. Interacts with tensin TNS3. Interacts (when phosphorylated) with tensin TNS4 (via SH2 domain); the interaction increases MET protein stability by inhibiting MET endocytosis and subsequent lysosomal degradation. Post-translationally, autophosphorylated in response to ligand binding on Tyr-1234 and Tyr-1235 in the kinase domain leading to further phosphorylation of Tyr-1349 and Tyr-1356 in the C-terminal multifunctional docking site. Dephosphorylated by PTPRJ at Tyr-1349 and Tyr-1365. Dephosphorylated by PTPN1 and PTPN2. In terms of processing, ubiquitinated. Ubiquitination by CBL regulates the receptor stability and activity through proteasomal degradation. O-mannosylation of IPT/TIG domains by TMEM260 is required for protein maturation. O-mannosylated residues are composed of single mannose glycans that are not elongated or modified.

It localises to the membrane. The catalysed reaction is L-tyrosyl-[protein] + ATP = O-phospho-L-tyrosyl-[protein] + ADP + H(+). With respect to regulation, in its inactive state, the C-terminal tail interacts with the catalytic domain and inhibits the kinase activity. Upon ligand binding, the C-terminal tail is displaced and becomes phosphorylated, thus increasing the kinase activity. In terms of biological role, receptor tyrosine kinase that transduces signals from the extracellular matrix into the cytoplasm by binding to hepatocyte growth factor/HGF ligand. Regulates many physiological processes including proliferation, scattering, morphogenesis and survival. Ligand binding at the cell surface induces autophosphorylation of MET on its intracellular domain that provides docking sites for downstream signaling molecules. Following activation by ligand, interacts with the PI3-kinase subunit PIK3R1, PLCG1, SRC, GRB2, STAT3 or the adapter GAB1. Recruitment of these downstream effectors by MET leads to the activation of several signaling cascades including the RAS-ERK, PI3 kinase-AKT, or PLCgamma-PKC. The RAS-ERK activation is associated with the morphogenetic effects while PI3K/AKT coordinates prosurvival effects. During embryonic development, MET signaling plays a role in gastrulation, development and migration of muscles and neuronal precursors, angiogenesis and kidney formation. In adults, participates in wound healing as well as organ regeneration and tissue remodeling. Also promotes differentiation and proliferation of hematopoietic cells. This is Hepatocyte growth factor receptor (MET) from Saimiri boliviensis boliviensis (Bolivian squirrel monkey).